The sequence spans 241 residues: Lactate utilization protein C (241 aa).

Belongs to the LutC/YkgG family.

Is involved in L-lactate degradation and allows cells to grow with lactate as the sole carbon source. This is Lactate utilization protein C from Geobacillus sp. (strain WCH70).